The following is a 119-amino-acid chain: Holo-[acyl-carrier-protein] synthase (119 aa).

Residues aspartate 8 and glutamate 58 each coordinate Mg(2+).

The protein belongs to the P-Pant transferase superfamily. AcpS family. Mg(2+) is required as a cofactor.

Its subcellular location is the cytoplasm. The catalysed reaction is apo-[ACP] + CoA = holo-[ACP] + adenosine 3',5'-bisphosphate + H(+). Its function is as follows. Transfers the 4'-phosphopantetheine moiety from coenzyme A to a Ser of acyl-carrier-protein. The polypeptide is Holo-[acyl-carrier-protein] synthase (Streptococcus mutans serotype c (strain ATCC 700610 / UA159)).